The primary structure comprises 353 residues: UPF0283 membrane protein YcjF (353 aa).

A compositionally biased stretch (basic and acidic residues) spans 1-19; that stretch reads MSEPLKPRIDFAEPLKEEP. Residues 1–35 form a disordered region; it reads MSEPLKPRIDFAEPLKEEPTSAFKAQQTFSEAESR. 3 consecutive transmembrane segments (helical) span residues 70 to 90, 100 to 120, and 213 to 233; these read MVMG…VQWT, VALG…GSVV, and ESTL…FIAW.

Belongs to the UPF0283 family.

Its subcellular location is the cell inner membrane. In Salmonella paratyphi B (strain ATCC BAA-1250 / SPB7), this protein is UPF0283 membrane protein YcjF.